The chain runs to 191 residues: NF-kappa-B inhibitor-interacting Ras-like protein 2 (191 aa).

Positions 1 to 191 (MGKSCKVVVC…KNKGSGSVDG (191 aa)) are small GTPase-like. 11 to 18 (GQAAVGKT) serves as a coordination point for GTP. The short motif at 35-43 (MIETQEDIY) is the Effector region element. GTP contacts are provided by residues 61–65 (DTRGL) and 120–123 (NKCD). The tract at residues 170–191 (QPQSKSAFPLSRKNKGSGSVDG) is disordered.

It belongs to the small GTPase superfamily. Ras family. KappaB-Ras subfamily.

It is found in the cytoplasm. Its function is as follows. Atypical Ras-like protein that acts as a potent regulator of NF-kappa-B activity by preventing the degradation of NF-kappa-B inhibitor beta (NFKBIB) by most signals, explaining why NFKBIB is more resistant to degradation. In Gallus gallus (Chicken), this protein is NF-kappa-B inhibitor-interacting Ras-like protein 2 (NKIRAS2).